Here is a 910-residue protein sequence, read N- to C-terminus: p53-induced death domain-containing protein 1 (910 aa).

The interval methionine 1 to alanine 25 is disordered. At alanine 2 the chain carries N-acetylalanine. 7 LRR repeats span residues histidine 126–methionine 147, glycine 149–proline 171, alanine 172–serine 194, threonine 195–leucine 216, serine 218–arginine 240, serine 241–proline 263, and leucine 264–alanine 285. 2 positions are modified to phosphoserine: serine 299 and serine 305. ZU5 domains follow at residues aspartate 322 to proline 454 and valine 455 to threonine 596. Peptidase S68 regions lie at residues aspartate 423–serine 452 and aspartate 566–tyrosine 594. Catalysis depends on residues histidine 444, serine 446, histidine 586, and serine 588. The interval alanine 580–alanine 716 is UPA domain. In terms of domain architecture, Death spans threonine 788–leucine 873. The interval isoleucine 884 to alanine 910 is disordered.

In terms of assembly, forms a complex named the PIDDosome with CASP2 and CRADD. Forms a complex with IKBKG and RIPK1. Interacts with FADD and MADD. In terms of processing, undergoes autoproteolytic processing whose extent either directs cells towards survival or apoptotic pathways. Autoproteolytically cleaved into two main fragments PIDD-N and PIDD-C. PIDD-C can be further processed into PIDD-CC, a processing which is enhanced by DNA damage. The cleavage producing PIDD-C is required for translocation of PIDD1 to the nucleus upon DNA damage and activation of NF-kappa-B. PIDD-CC mediates the interaction with CRADD and the cleavage producing PIDD-CC is required for the activation of CASP2. PIDD-N remains associated with PIDD-C and PIDD-CC after cleavage. As to expression, ubiquitous.

It is found in the cytoplasm. The protein localises to the nucleus. Its function is as follows. Component of the DNA damage/stress response pathway that functions downstream of p53/TP53 and can either promote cell survival or apoptosis. Associated with CRADD and the CASP2 caspase, it forms the PIDDosome a complex that activates CASP2 and triggers apoptosis. Associated with IKBKG and RIPK1, it enhances sumoylation and ubiquitination of IKBKG which is important for activation of the transcription factor NF-kappa-B. The protein is p53-induced death domain-containing protein 1 of Homo sapiens (Human).